A 545-amino-acid chain; its full sequence is Vicilin Pis v 3.0101 (545 aa).

Positions 1 to 25 are cleaved as a signal peptide; the sequence is MGSRTKFCLTLFLVSVLILCAGLAL. 2 disordered regions span residues 62–93 and 129–154; these read KEKK…HEPG and REHS…DENP. Over residues 82-93 the composition is skewed to basic and acidic residues; sequence GRGDEFSTHEPG. The span at 136-153 shows a compositional bias: acidic residues; sequence DEEEEEEGDEEQEEEDEN. Residues 354–517 enclose the Cupin type-1 2 domain; it reads TFNLFKKDPS…LAFKTKGEEV (164 aa).

Belongs to the 7S seed storage protein family. In terms of tissue distribution, expressed in seed.

In terms of biological role, seed storage protein. This Pistacia vera (Pistachio) protein is Vicilin Pis v 3.0101.